Consider the following 150-residue polypeptide: 3-hydroxyacyl-[acyl-carrier-protein] dehydratase FabZ (150 aa).

H47 is a catalytic residue.

The protein belongs to the thioester dehydratase family. FabZ subfamily.

The protein localises to the cytoplasm. The enzyme catalyses a (3R)-hydroxyacyl-[ACP] = a (2E)-enoyl-[ACP] + H2O. Involved in unsaturated fatty acids biosynthesis. Catalyzes the dehydration of short chain beta-hydroxyacyl-ACPs and long chain saturated and unsaturated beta-hydroxyacyl-ACPs. In Verminephrobacter eiseniae (strain EF01-2), this protein is 3-hydroxyacyl-[acyl-carrier-protein] dehydratase FabZ.